The following is a 235-amino-acid chain: Ubiquinone biosynthesis O-methyltransferase (235 aa).

S-adenosyl-L-methionine-binding residues include Arg39, Gly59, Asp80, and Met124.

Belongs to the methyltransferase superfamily. UbiG/COQ3 family.

The enzyme catalyses a 3-demethylubiquinol + S-adenosyl-L-methionine = a ubiquinol + S-adenosyl-L-homocysteine + H(+). It carries out the reaction a 3-(all-trans-polyprenyl)benzene-1,2-diol + S-adenosyl-L-methionine = a 2-methoxy-6-(all-trans-polyprenyl)phenol + S-adenosyl-L-homocysteine + H(+). It functions in the pathway cofactor biosynthesis; ubiquinone biosynthesis. Its function is as follows. O-methyltransferase that catalyzes the 2 O-methylation steps in the ubiquinone biosynthetic pathway. The polypeptide is Ubiquinone biosynthesis O-methyltransferase (Vibrio campbellii (strain ATCC BAA-1116)).